The chain runs to 88 residues: MAKGQSLQDPFLNALRRERIPVSIYLVNGIKLQGQIESFDQFVILLKNTVNQMVYKHAISTVVPARAVSHHSASDRPQGERPQEKTEE.

The Sm domain occupies 9–68 (DPFLNALRRERIPVSIYLVNGIKLQGQIESFDQFVILLKNTVNQMVYKHAISTVVPARAV). The tract at residues 66 to 88 (RAVSHHSASDRPQGERPQEKTEE) is disordered. The span at 72 to 88 (SASDRPQGERPQEKTEE) shows a compositional bias: basic and acidic residues.

This sequence belongs to the Hfq family. As to quaternary structure, homohexamer.

Its function is as follows. RNA chaperone that binds small regulatory RNA (sRNAs) and mRNAs to facilitate mRNA translational regulation in response to envelope stress, environmental stress and changes in metabolite concentrations. Also binds with high specificity to tRNAs. In Aliivibrio fischeri (strain ATCC 700601 / ES114) (Vibrio fischeri), this protein is RNA-binding protein Hfq.